We begin with the raw amino-acid sequence, 478 residues long: ATP synthase subunit beta (478 aa).

164 to 171 (GGAGVGKT) contacts ATP.

The protein belongs to the ATPase alpha/beta chains family. In terms of assembly, F-type ATPases have 2 components, CF(1) - the catalytic core - and CF(0) - the membrane proton channel. CF(1) has five subunits: alpha(3), beta(3), gamma(1), delta(1), epsilon(1). CF(0) has three main subunits: a(1), b(2) and c(9-12). The alpha and beta chains form an alternating ring which encloses part of the gamma chain. CF(1) is attached to CF(0) by a central stalk formed by the gamma and epsilon chains, while a peripheral stalk is formed by the delta and b chains.

It localises to the cell membrane. The catalysed reaction is ATP + H2O + 4 H(+)(in) = ADP + phosphate + 5 H(+)(out). Functionally, produces ATP from ADP in the presence of a proton gradient across the membrane. The catalytic sites are hosted primarily by the beta subunits. The polypeptide is ATP synthase subunit beta (Streptomyces avermitilis (strain ATCC 31267 / DSM 46492 / JCM 5070 / NBRC 14893 / NCIMB 12804 / NRRL 8165 / MA-4680)).